We begin with the raw amino-acid sequence, 236 residues long: Probable glutathione S-transferase BZ2 (236 aa).

A GST N-terminal domain is found at 1-80 (MRVLGGEVSP…YIEDVARESG (80 aa)). Glutathione contacts are provided by residues S9, K37, I51, and 64 to 65 (ES). The region spanning 92–221 (DPYERAMHRF…LPDTEKVVQF (130 aa)) is the GST C-terminal domain.

The protein belongs to the GST superfamily. HSP26 family.

The catalysed reaction is RX + glutathione = an S-substituted glutathione + a halide anion + H(+). It functions in the pathway pigment biosynthesis; anthocyanin biosynthesis. This is Probable glutathione S-transferase BZ2 (BZ2) from Zea mays (Maize).